The primary structure comprises 490 residues: 5-hydroxytryptamine receptor 3A (490 aa).

Positions 1-19 are cleaved as a signal peptide; sequence MVLWLQLALLALLLPTSLA. The Extracellular segment spans residues 20 to 249; that stretch reads QGEVRGKGTA…FYVVIRRRPL (230 aa). Asn33, Asn109, Asn175, and Asn191 each carry an N-linked (GlcNAc...) asparagine glycan. A disulfide bridge links Cys162 with Cys176. Residues 250 to 270 traverse the membrane as a helical segment; sequence FYAVTLLLPSIFLMIVDIVGF. Over 271–285 the chain is Cytoplasmic; it reads YLPPDSGERVSFKIT. A helical transmembrane segment spans residues 286 to 306; it reads LLLGYSVFLIIVSDTLPATAI. Residues 307–312 are Extracellular-facing; it reads GTPLIS. A helical membrane pass occupies residues 313–333; sequence VYFVVCMALLVISLAETILIV. Over 334 to 467 the chain is Cytoplasmic; the sequence is RLVHKQDLQQ…GSVLDKLLFR (134 aa). The segment at 401–422 is disordered; that stretch reads GGPQDLEKTSRGRGSPPPPPRE. The HA-stretch; determines single-channel conductance in 5-HT3 receptors stretch occupies residues 426 to 462; the sequence is AMCGLLQELASIRHFLEKREETREVARDWLRVGSVLD. A helical transmembrane segment spans residues 468 to 488; sequence VYLLAVLAYSITLVTLWSVWH. Residues 489-490 lie on the Extracellular side of the membrane; it reads YA.

Belongs to the ligand-gated ion channel (TC 1.A.9) family. 5-hydroxytryptamine receptor (TC 1.A.9.2) subfamily. HTR3A sub-subfamily. As to quaternary structure, forms homopentameric as well as heteropentameric serotonin-activated cation-selective channel complexes with HTR3B or HTR3C or HTR3D or HTR3E. The homomeric complex is functional but exhibits low conductance with modified voltage dependence, and decreased agonist and antagonist affinity. Heteropentameric complexes display properties which resemble that of neuronal serotonin-activated channels in vivo. Interacts with RIC3. As to expression, expressed in cortex, intestine and liver. Not expressed in muscle or spleen.

The protein localises to the postsynaptic cell membrane. The protein resides in the cell membrane. It catalyses the reaction Na(+)(in) = Na(+)(out). The catalysed reaction is K(+)(in) = K(+)(out). It carries out the reaction Ca(2+)(in) = Ca(2+)(out). The enzyme catalyses Mg(2+)(in) = Mg(2+)(out). Its function is as follows. Forms serotonin (5-hydroxytryptamine/5-HT3)-activated cation-selective channel complexes, which when activated cause fast, depolarizing responses in neurons. This is 5-hydroxytryptamine receptor 3A from Cavia porcellus (Guinea pig).